Consider the following 331-residue polypeptide: D-alanine--D-alanine ligase (331 aa).

One can recognise an ATP-grasp domain in the interval 116–316 (KRQWQTHGLP…YEDFVLQLAA (201 aa)). 142–197 (ADRLGLPLIVKPAREGSSIGLTKVTSVAELPAAYEKAARLDRDVMAEQFIEGDELT) serves as a coordination point for ATP. Residues D269, E283, and N285 each contribute to the Mg(2+) site.

Belongs to the D-alanine--D-alanine ligase family. Mg(2+) is required as a cofactor. Mn(2+) serves as cofactor.

Its subcellular location is the cytoplasm. It catalyses the reaction 2 D-alanine + ATP = D-alanyl-D-alanine + ADP + phosphate + H(+). The protein operates within cell wall biogenesis; peptidoglycan biosynthesis. In terms of biological role, cell wall formation. This is D-alanine--D-alanine ligase from Ralstonia pickettii (strain 12J).